Reading from the N-terminus, the 379-residue chain is Cytochrome b (379 aa).

4 helical membrane passes run 33 to 53 (FGSL…FLAM), 77 to 98 (WTIR…FIHV), 113 to 133 (WNIG…GYVL), and 178 to 198 (FFAL…IHLL). Residues H83 and H97 each contribute to the heme b site. Heme b is bound by residues H182 and H196. H201 contacts a ubiquinone. 4 consecutive transmembrane segments (helical) span residues 226-246 (TKDF…TLFY), 288-308 (LGGV…PFLQ), 320-340 (LSQF…WIGG), and 347-367 (FISI…FIMP).

Belongs to the cytochrome b family. In terms of assembly, the cytochrome bc1 complex contains 11 subunits: 3 respiratory subunits (MT-CYB, CYC1 and UQCRFS1), 2 core proteins (UQCRC1 and UQCRC2) and 6 low-molecular weight proteins (UQCRH/QCR6, UQCRB/QCR7, UQCRQ/QCR8, UQCR10/QCR9, UQCR11/QCR10 and a cleavage product of UQCRFS1). This cytochrome bc1 complex then forms a dimer. Heme b is required as a cofactor.

The protein resides in the mitochondrion inner membrane. Its function is as follows. Component of the ubiquinol-cytochrome c reductase complex (complex III or cytochrome b-c1 complex) that is part of the mitochondrial respiratory chain. The b-c1 complex mediates electron transfer from ubiquinol to cytochrome c. Contributes to the generation of a proton gradient across the mitochondrial membrane that is then used for ATP synthesis. The polypeptide is Cytochrome b (MT-CYB) (Lepilemur randrianasoloi (Randrianasoli's sportive lemur)).